Reading from the N-terminus, the 157-residue chain is 2-C-methyl-D-erythritol 2,4-cyclodiphosphate synthase (157 aa).

Positions 8 and 10 each coordinate a divalent metal cation. 4-CDP-2-C-methyl-D-erythritol 2-phosphate contacts are provided by residues 8–10 (DVH) and 34–35 (HS). Residue H42 participates in a divalent metal cation binding. Residues 56 to 58 (DIG), 61 to 65 (FPDTD), 100 to 106 (AQKPKMA), 132 to 135 (TTTE), and F139 each bind 4-CDP-2-C-methyl-D-erythritol 2-phosphate.

Belongs to the IspF family. As to quaternary structure, homotrimer. The cofactor is a divalent metal cation.

It catalyses the reaction 4-CDP-2-C-methyl-D-erythritol 2-phosphate = 2-C-methyl-D-erythritol 2,4-cyclic diphosphate + CMP. The protein operates within isoprenoid biosynthesis; isopentenyl diphosphate biosynthesis via DXP pathway; isopentenyl diphosphate from 1-deoxy-D-xylulose 5-phosphate: step 4/6. Involved in the biosynthesis of isopentenyl diphosphate (IPP) and dimethylallyl diphosphate (DMAPP), two major building blocks of isoprenoid compounds. Catalyzes the conversion of 4-diphosphocytidyl-2-C-methyl-D-erythritol 2-phosphate (CDP-ME2P) to 2-C-methyl-D-erythritol 2,4-cyclodiphosphate (ME-CPP) with a corresponding release of cytidine 5-monophosphate (CMP). The chain is 2-C-methyl-D-erythritol 2,4-cyclodiphosphate synthase from Alkaliphilus oremlandii (strain OhILAs) (Clostridium oremlandii (strain OhILAs)).